Here is a 547-residue protein sequence, read N- to C-terminus: RNA polymerase sigma factor sigF, chloroplastic (547 aa).

Positions 1 to 17 (MEATRNLVSSSPSFQTK) are enriched in polar residues. 2 disordered regions span residues 1 to 28 (MEATRNLVSSSPSFQTKTHLKSSYSSPS) and 54 to 79 (FPASVLSQEPREESRPLSHALRDDRT). A chloroplast-targeting transit peptide spans 1 to 55 (MEATRNLVSSSPSFQTKTHLKSSYSSPSSVVMLHDQTTTPVVNSRHLNSLSRHFP). Over residues 62-79 (EPREESRPLSHALRDDRT) the composition is skewed to basic and acidic residues. Phosphoserine; by CK2 occurs at positions 94, 95, 174, 176, 177, and 180. Residues 163-226 (ANPSDNIKDS…QKTSAKKKYK (64 aa)) are disordered. Low complexity predominate over residues 172–181 (SLSTSSSMSL). Thr-249 bears the Phosphothreonine; by CK2 mark. The short motif at 335 to 348 (DLLQEGSMGLMKSV) is the Polymerase core binding element. Positions 505 to 524 (LSEIGEIYGLSKERVRQLES) form a DNA-binding region, H-T-H motif.

This sequence belongs to the sigma-70 factor family. Interacts (via N-terminus) with DG1 (via C-terminus). Phosphorylated to acquire sigma activity; site-specific phosphorylation regulates promoter affinity. Phosphorylation at Ser-174 by chloroplastic CK2 requires prior phosphorylation at Ser-177. Phosphorylation at either Ser-94, Ser-95 or Ser-174 is required for sigma activation. Expressed in seedling, accumulating progressively. Present in leaves but not in roots.

The protein localises to the plastid. The protein resides in the chloroplast. Sigma factors are initiation factors that promote the attachment of plastid-encoded RNA polymerase (PEP) to specific initiation sites and are then released. Regulates transcription in chloroplast in a DG1-dependent manner. Involved in light-dependent chloroplast development. Required during early plant development and primary leaf formation. In Arabidopsis thaliana (Mouse-ear cress), this protein is RNA polymerase sigma factor sigF, chloroplastic (SIGF).